Here is a 707-residue protein sequence, read N- to C-terminus: Ribosomal RNA large subunit methyltransferase K/L (707 aa).

Residues 44–155 enclose the THUMP domain; the sequence is VIYNLCLWSR…NDILTVSFDL (112 aa).

Belongs to the methyltransferase superfamily. RlmKL family.

It is found in the cytoplasm. The enzyme catalyses guanosine(2445) in 23S rRNA + S-adenosyl-L-methionine = N(2)-methylguanosine(2445) in 23S rRNA + S-adenosyl-L-homocysteine + H(+). It carries out the reaction guanosine(2069) in 23S rRNA + S-adenosyl-L-methionine = N(2)-methylguanosine(2069) in 23S rRNA + S-adenosyl-L-homocysteine + H(+). In terms of biological role, specifically methylates the guanine in position 2445 (m2G2445) and the guanine in position 2069 (m7G2069) of 23S rRNA. The protein is Ribosomal RNA large subunit methyltransferase K/L of Legionella pneumophila subsp. pneumophila (strain Philadelphia 1 / ATCC 33152 / DSM 7513).